Here is a 1054-residue protein sequence, read N- to C-terminus: Reverse gyrase (1054 aa).

Residues 1 to 43 (MIPVVYSNLCPVCGGDLESKEIEKHVCFRKKRSLCLFPEDFLL) form an RG N-terminal-type zinc finger. The Zn(2+) site is built by C10, C13, C27, and C35. C35 and C650 form a disulfide bridge. ATP contacts are provided by Q61, K84, T85, and S86. The Helicase ATP-binding domain occupies 65-245 (AKRILRKESF…FRQLLNFDIG (181 aa)). A DEAD box motif is present at residues 182–185 (DDVD). Residues 352 to 427 (PSFRVTIEDI…EGEVIFPDLR (76 aa)) are latch region. Residues 502–1054 (DLIKPALFIV…DLYAEIKSID (553 aa)) form a topoisomerase I region. Residues 506–662 (PALFIVESPT…VKRAEFHEVT (157 aa)) enclose the Toprim domain. E512 serves as a coordination point for Mg(2+). The RG C-terminal-type zinc finger occupies 581–609 (IKRCRDCGYQFTEDRESCPKCGSENVDNS). C584, C587, C598, and C601 together coordinate Zn(2+). D631 is a binding site for Mg(2+). The Topo IA-type catalytic domain occupies 677–1054 (DENLVKAQVV…DLYAEIKSID (378 aa)). The active-site O-(5'-phospho-DNA)-tyrosine intermediate is the Y809.

It in the N-terminal section; belongs to the DEAD box helicase family. DDVD subfamily. The protein in the C-terminal section; belongs to the type IA topoisomerase family. In terms of assembly, monomer. It depends on Zn(2+) as a cofactor. Mg(2+) serves as cofactor.

It localises to the cytoplasm. The enzyme catalyses ATP + H2O = ADP + phosphate + H(+). Modifies the topological state of DNA by introducing positive supercoils in an ATP-dependent process, increasing the linking number in steps of +1. Very efficient supercoiling occurs on relaxed DNA with a single-stranded bubble; the minimal bubble is 20 nucleotides (nt) and up to 10 positive supercoils can be introduced into a 3.1 kb plasmid with a 50 nt bubble. Positively supercoils DNA with all (d)NTPS, although it requires about 10-fold more of non-(d)ATP. In the absence of ATP (or at low levels of enzyme), or in the presence of ADP, relaxes negative supercoils. Only relaxes positive supercoils when the substrate contains a bubble. Also promotes strand annealing of complementary ssDNA circles. Binds to single-stranded DNA, transiently cleaves and then rejoins the ends, introducing a positive supercoil in the process. The scissile phosphodiester is attacked by the catalytic tyrosine of the enzyme, resulting in the formation of a DNA-(5'-phosphotyrosyl)-enzyme intermediate. Probably involved in rewinding DNA strands in regions of the chromosome that have opened up to allow replication, transcription, DNA repair and/or for DNA protection. Functionally, in vitro protects DNA against degradation at 90 degrees Celsius, reducing dsDNA breakage about 8-fold; ATP hydrolysis is not necessary, while ADP decreases the protection somewhat. Coats all forms of dsDNA; the DNA is protected against cleavage and transcription. Recognizes nicked DNA and forms a coat at the nicking site, which may help hold DNA in a structure amenable to repair. The sequence is that of Reverse gyrase from Archaeoglobus fulgidus (strain ATCC 49558 / DSM 4304 / JCM 9628 / NBRC 100126 / VC-16).